We begin with the raw amino-acid sequence, 89 residues long: Defensin-like protein 250 (89 aa).

Residues 1 to 23 (MKLAAIFLVSCVLLSLLPSLTIA) form the signal peptide. Intrachain disulfides connect Cys-29–Cys-86, Cys-40–Cys-69, Cys-48–Cys-79, and Cys-67–Cys-81.

Belongs to the DEFL family.

The protein resides in the secreted. The protein is Defensin-like protein 250 (SCRL8) of Arabidopsis thaliana (Mouse-ear cress).